The primary structure comprises 192 residues: Large ribosomal subunit protein bL25 (192 aa).

Belongs to the bacterial ribosomal protein bL25 family. CTC subfamily. In terms of assembly, part of the 50S ribosomal subunit; part of the 5S rRNA/L5/L18/L25 subcomplex. Contacts the 5S rRNA. Binds to the 5S rRNA independently of L5 and L18.

This is one of the proteins that binds to the 5S RNA in the ribosome where it forms part of the central protuberance. In Cytophaga hutchinsonii (strain ATCC 33406 / DSM 1761 / CIP 103989 / NBRC 15051 / NCIMB 9469 / D465), this protein is Large ribosomal subunit protein bL25.